The sequence spans 668 residues: Threonine--tRNA ligase (668 aa).

Residues 1 to 64 (MSQAISLTFP…TDGKIEIITR (64 aa)) form the TGS domain. The segment at 245–553 (DHRKLGREMD…LIENFAGHMP (309 aa)) is catalytic. Positions 347, 398, and 530 each coordinate Zn(2+).

It belongs to the class-II aminoacyl-tRNA synthetase family. Homodimer. The cofactor is Zn(2+).

The protein resides in the cytoplasm. It catalyses the reaction tRNA(Thr) + L-threonine + ATP = L-threonyl-tRNA(Thr) + AMP + diphosphate + H(+). Catalyzes the attachment of threonine to tRNA(Thr) in a two-step reaction: L-threonine is first activated by ATP to form Thr-AMP and then transferred to the acceptor end of tRNA(Thr). Also edits incorrectly charged L-seryl-tRNA(Thr). The chain is Threonine--tRNA ligase from Rhizobium etli (strain CIAT 652).